The following is a 245-amino-acid chain: NAD(P)H-hydrate epimerase (245 aa).

The YjeF N-terminal domain maps to 16 to 224 (AAALDAELMA…HIADKYDLEV (209 aa)). 68-72 (NNGGD) is a binding site for (6S)-NADPHX. Residues N69 and D131 each contribute to the K(+) site. (6S)-NADPHX is bound by residues 135–141 (GFSFKPP) and D164. S167 serves as a coordination point for K(+).

It belongs to the NnrE/AIBP family. It depends on K(+) as a cofactor.

Its subcellular location is the cytoplasm. The protein localises to the mitochondrion. The enzyme catalyses (6R)-NADHX = (6S)-NADHX. The catalysed reaction is (6R)-NADPHX = (6S)-NADPHX. Catalyzes the epimerization of the S- and R-forms of NAD(P)HX, a damaged form of NAD(P)H that is a result of enzymatic or heat-dependent hydration. This is a prerequisite for the S-specific NAD(P)H-hydrate dehydratase to allow the repair of both epimers of NAD(P)HX. This Yarrowia lipolytica (strain CLIB 122 / E 150) (Yeast) protein is NAD(P)H-hydrate epimerase.